The primary structure comprises 266 residues: Phosphonates import ATP-binding protein PhnC (266 aa).

The 245-residue stretch at 2–246 folds into the ABC transporter domain; the sequence is IEIKNVSKTY…KFAEIYGRPI (245 aa). Residue 35–42 coordinates ATP; it reads GLSGAGKS.

Belongs to the ABC transporter superfamily. Phosphonates importer (TC 3.A.1.9.1) family. In terms of assembly, the complex is composed of two ATP-binding proteins (PhnC), two transmembrane proteins (PhnE) and a solute-binding protein (PhnD).

It localises to the cell membrane. It catalyses the reaction phosphonate(out) + ATP + H2O = phosphonate(in) + ADP + phosphate + H(+). In terms of biological role, part of the ABC transporter complex PhnCDE involved in phosphonates import. Responsible for energy coupling to the transport system. The chain is Phosphonates import ATP-binding protein PhnC from Shouchella clausii (strain KSM-K16) (Alkalihalobacillus clausii).